The primary structure comprises 156 residues: Ribosomal RNA large subunit methyltransferase H (156 aa).

S-adenosyl-L-methionine contacts are provided by residues Leu73, Gly104, and 123–128 (LSPLTL).

This sequence belongs to the RNA methyltransferase RlmH family. As to quaternary structure, homodimer.

It is found in the cytoplasm. It catalyses the reaction pseudouridine(1915) in 23S rRNA + S-adenosyl-L-methionine = N(3)-methylpseudouridine(1915) in 23S rRNA + S-adenosyl-L-homocysteine + H(+). Its function is as follows. Specifically methylates the pseudouridine at position 1915 (m3Psi1915) in 23S rRNA. In Hahella chejuensis (strain KCTC 2396), this protein is Ribosomal RNA large subunit methyltransferase H.